The sequence spans 365 residues: 3-dehydroquinate synthase (365 aa).

NAD(+) is bound by residues 107–111 (GVIGD), 131–132 (TT), Lys-144, and Lys-153. Positions 186, 251, and 268 each coordinate Zn(2+).

It belongs to the sugar phosphate cyclases superfamily. Dehydroquinate synthase family. Co(2+) is required as a cofactor. Zn(2+) serves as cofactor. Requires NAD(+) as cofactor.

Its subcellular location is the cytoplasm. The enzyme catalyses 7-phospho-2-dehydro-3-deoxy-D-arabino-heptonate = 3-dehydroquinate + phosphate. The protein operates within metabolic intermediate biosynthesis; chorismate biosynthesis; chorismate from D-erythrose 4-phosphate and phosphoenolpyruvate: step 2/7. Functionally, catalyzes the conversion of 3-deoxy-D-arabino-heptulosonate 7-phosphate (DAHP) to dehydroquinate (DHQ). This Picosynechococcus sp. (strain ATCC 27264 / PCC 7002 / PR-6) (Agmenellum quadruplicatum) protein is 3-dehydroquinate synthase.